A 163-amino-acid polypeptide reads, in one-letter code: Ribonuclease H (163 aa).

In terms of domain architecture, RNase H type-1 spans 16–157 (TTSPVEIYCD…CDSLARQAIT (142 aa)). Residues D25, E63, D85, and D149 each coordinate Mg(2+).

It belongs to the RNase H family. Monomer. Mg(2+) serves as cofactor.

It is found in the cytoplasm. It catalyses the reaction Endonucleolytic cleavage to 5'-phosphomonoester.. Its function is as follows. Endonuclease that specifically degrades the RNA of RNA-DNA hybrids. The protein is Ribonuclease H of Pelobacter propionicus (strain DSM 2379 / NBRC 103807 / OttBd1).